We begin with the raw amino-acid sequence, 701 residues long: UvrABC system protein B (701 aa).

Positions 35–422 (RRIQGGAADT…GGDVVEQVIR (388 aa)) constitute a Helicase ATP-binding domain. ATP is bound at residue 48–55 (GATGTGKT). Positions 101-124 (YYDYYQPEAYVPQTDTYIEKDSSI) match the Beta-hairpin motif. The 167-residue stretch at 439–605 (QIDDLVHEIR…PLRKKIADIL (167 aa)) folds into the Helicase C-terminal domain. Residues 620-648 (ARSRGEKRGTPTPRSGALSGPDRVAEQAK) form a disordered region. One can recognise a UVR domain in the interval 656 to 691 (AALVEQLTEQMHQAAADLQFELAARLRDEIKELKRE).

It belongs to the UvrB family. In terms of assembly, forms a heterotetramer with UvrA during the search for lesions. Interacts with UvrC in an incision complex.

The protein resides in the cytoplasm. Functionally, the UvrABC repair system catalyzes the recognition and processing of DNA lesions. A damage recognition complex composed of 2 UvrA and 2 UvrB subunits scans DNA for abnormalities. Upon binding of the UvrA(2)B(2) complex to a putative damaged site, the DNA wraps around one UvrB monomer. DNA wrap is dependent on ATP binding by UvrB and probably causes local melting of the DNA helix, facilitating insertion of UvrB beta-hairpin between the DNA strands. Then UvrB probes one DNA strand for the presence of a lesion. If a lesion is found the UvrA subunits dissociate and the UvrB-DNA preincision complex is formed. This complex is subsequently bound by UvrC and the second UvrB is released. If no lesion is found, the DNA wraps around the other UvrB subunit that will check the other stand for damage. In Thermobifida fusca (strain YX), this protein is UvrABC system protein B.